Reading from the N-terminus, the 212-residue chain is MKEYKILLVDDHEIIINGIMNALLPWPHFKIVEHVKNGLEVYNACCAYEPDILILDLSLPGINGLDIIPQLHQRWPAMNILVYTAYQQEYMTIKTLAAGANGYVLKSSSQQVLLAALQTVAVNKRYIDPTLNREAILAELNADTTNHQLLTLRERQVLKLIDEGYTNHGISEKLHISIKTVETHRMNMMRKLQVHKVTELLNCARRMRLIEY.

Residues 1–138 (MKEYKILLVD…PTLNREAILA (138 aa)) form a required for prevention of DNA binding in absence of phosphorylation and for full stimulation of activity by acidic pH region. In terms of domain architecture, Response regulatory spans 5 to 121 (KILLVDDHEI…VLLAALQTVA (117 aa)). Residue Asp56 is modified to 4-aspartylphosphate. An HTH luxR-type domain is found at 143-208 (DTTNHQLLTL…ELLNCARRMR (66 aa)). Residues 167 to 186 (NHGISEKLHISIKTVETHRM) constitute a DNA-binding region (H-T-H motif). Cys203 carries the post-translational modification S-nitrosocysteine.

In terms of assembly, homodimer; disulfide-linked; dimerizes upon DNA-binding. Post-translationally, ssrB phosphorylated on Asp-56 activates the expression of virulence genes whereas the unphosphorylated form controls biofilm formation. Independently of SsrA, can be phosphorylated by small inorganic phosphate donors (such as acetyl phosphate or phosphoramidate). In terms of processing, disulfide bond formation at Cys-203 is not required for dimerization. Cys-203 may serve as a redox sensor that is nitrosylated in presence of reactive nitrogen species (RNS) generated by the host, the modification modulates its DNA-binding activity. Cys-203 is relatively resistant to oxidation by hydrogen peroxide.

Its subcellular location is the cytoplasm. In terms of biological role, member of the two-component regulatory system SsrA/SsrB (SpiR/SsrB) that is required for intracellular proliferation and systemic dissemination within the host. When inside acidic Salmonella-containing vesicles (SCV) within host cells the SsrA sensor kinase autophosphorylates and the phosphoryl group is transferred to the response regulator SsrB; phosphorylated SsrB activates the expression of genes encoding virulence proteins, including pathogenicity island 2 (SPI2) and other horizontally acquired genes, but also ancestral genes; it can stimulate gene expression both by recruiting RNA polymerase and by antagonizing the action of the transcriptional repressor hns (H-NS). Can also act independently of sensor kinase ssrA to support the dormant carrier state by directing the transcription of factors required for biofilm formation. DNA-binding is stimulated by acidic pH conditions, and binding promotes bending of DNA both upstream and downstream of binding sites. Binds a degenerate 18-basepair palindromic sequence with a 7-4-7 internal organization, and regulates gene expression from 86 operons. When phosphorylated, activates the transcription of the ABC transporter complex dalSTUV, which helps protect the organism from oxidative killing by host neutrophils. Binds the phoP promoter to stimulate expression in acidic pH conditions. Antagonizes hns to activate the transcription of ugtL. Following invasion of host cells, binds the hilD and hilA regulatory regions to repress their transcription and consequently to repress transcription of pathogenicity island 1 (SPI1) encoding genes involved in host cell invasion. Binds the promoters of the flagellar master regulators flhD and flhC to repress their expression and consequently to suppress flagellar motility and promote evasion of the host inflammasome during infection of host cells. Activates expression of sseI/srfH, sifA, sifB, sseJ and regulates its own expression. When unphosphorylated, relieves the hns-mediated repression of master biofilm regulator csgD by binding and bending the csgD regulatory region. May act as early as in the lumen of the host small intestine, to activate the expression of virulence proteins prior to invasion of host cells. In Salmonella typhimurium (strain LT2 / SGSC1412 / ATCC 700720), this protein is Response regulator SsrB.